We begin with the raw amino-acid sequence, 218 residues long: Deoxyribose-phosphate aldolase (218 aa).

Asp-89 serves as the catalytic Proton donor/acceptor. Residue Lys-152 is the Schiff-base intermediate with acetaldehyde of the active site. Lys-182 functions as the Proton donor/acceptor in the catalytic mechanism.

The protein belongs to the DeoC/FbaB aldolase family. DeoC type 1 subfamily.

It localises to the cytoplasm. The enzyme catalyses 2-deoxy-D-ribose 5-phosphate = D-glyceraldehyde 3-phosphate + acetaldehyde. It functions in the pathway carbohydrate degradation; 2-deoxy-D-ribose 1-phosphate degradation; D-glyceraldehyde 3-phosphate and acetaldehyde from 2-deoxy-alpha-D-ribose 1-phosphate: step 2/2. Catalyzes a reversible aldol reaction between acetaldehyde and D-glyceraldehyde 3-phosphate to generate 2-deoxy-D-ribose 5-phosphate. The chain is Deoxyribose-phosphate aldolase from Corynebacterium diphtheriae (strain ATCC 700971 / NCTC 13129 / Biotype gravis).